We begin with the raw amino-acid sequence, 59 residues long: Small ribosomal subunit protein bS21 (59 aa).

The interval 35 to 59 (REHYEKPSVKKKKKSEAAKRKKRNF) is disordered. A compositionally biased stretch (basic residues) spans 43–59 (VKKKKKSEAAKRKKRNF).

The protein belongs to the bacterial ribosomal protein bS21 family.

This chain is Small ribosomal subunit protein bS21, found in Finegoldia magna (strain ATCC 29328 / DSM 20472 / WAL 2508) (Peptostreptococcus magnus).